The chain runs to 520 residues: GMP synthase [glutamine-hydrolyzing] (520 aa).

Residues 12 to 205 (KIIVLDYGSQ…AISICGARGD (194 aa)) enclose the Glutamine amidotransferase type-1 domain. The active-site Nucleophile is cysteine 89. Residues histidine 179 and glutamate 181 contribute to the active site. One can recognise a GMPS ATP-PPase domain in the interval 206 to 395 (WSMDNFIDME…LGMPEEIVWR (190 aa)). Residue 233 to 239 (SGGVDSS) participates in ATP binding.

As to quaternary structure, homodimer.

It carries out the reaction XMP + L-glutamine + ATP + H2O = GMP + L-glutamate + AMP + diphosphate + 2 H(+). Its pathway is purine metabolism; GMP biosynthesis; GMP from XMP (L-Gln route): step 1/1. Catalyzes the synthesis of GMP from XMP. This is GMP synthase [glutamine-hydrolyzing] from Streptococcus pyogenes serotype M2 (strain MGAS10270).